Reading from the N-terminus, the 262-residue chain is 4-hydroxy-2-oxo-heptane-1,7-dioate aldolase (262 aa).

His45 serves as the catalytic Proton acceptor. Residue Gln147 participates in substrate binding. Glu149 contacts a divalent metal cation. Ala174 and Asp175 together coordinate substrate. Residue Asp175 coordinates a divalent metal cation.

It belongs to the HpcH/HpaI aldolase family. As to quaternary structure, homohexamer; trimer of dimers. It depends on a divalent metal cation as a cofactor.

It carries out the reaction 4-hydroxy-2-oxoheptanedioate = succinate semialdehyde + pyruvate. It participates in aromatic compound metabolism; 4-hydroxyphenylacetate degradation; pyruvate and succinate semialdehyde from 4-hydroxyphenylacetate: step 7/7. Functionally, catalyzes the reversible retro-aldol cleavage of 4-hydroxy-2-ketoheptane-1,7-dioate (HKHD) to pyruvate and succinic semialdehyde. The chain is 4-hydroxy-2-oxo-heptane-1,7-dioate aldolase from Shigella boydii serotype 18 (strain CDC 3083-94 / BS512).